A 1816-amino-acid chain; its full sequence is MFNKSFGTPFGGGTGGFGTTSTFGQNTGFGTTSGGAFGTSAFGSSNNTGGLFGNSQTKPGGLFGTSSFSQPATSTSTGFGFGTSTGTSNSLFGTANTGTSLFSSQNNAFAQNKPTGFGNFGTSTSSGGLFGTTNTTSNPFGNTSGSLFGPSSFTAAPTGTTIKFNPPTGTDTMVKAGVSTNISTKHQCITAMKEYESKSLEELRLEDYQANRKGPQNQVGAGTTTGLFGSSPATSSATGLFSSSTTNSAFSYGQNKTAFGTSTTGFGTNPGGLFGQQNQQTTSLFSKPFGQATTTPNTGFSFGNTSTLGQPSTNTMGLFGVTQASQPGGLFGTATNTSTGTAFGTGTGLFGQPNTGFGAVGSTLFGNNKLTTFGTSTTSAPSFGTTSGGLFGNKPTLTLGTNTNTSNFGFGTNNSGSSIFGSKPAAGTLGTGLGTGFGTALGAGQASLFGNNQPKIGGPLGTGAFGAPGFNTSTAILGFGAPQAPVALTDPNASAAQQAVLQQHLNSLTYSPFGDSPLFRNPMSDPKKKEERLKPTNPAAQKALTTPTHYKLTPRPATRVRPKALQTTGTAKSHLFDGLDDDEPSLANGAFMPKKSIKKLVLKNLNNSNLFSPVNHDSEDLASPSEYPENGERFSFLSKPVDENHQQDGDDDSLVSRFYTNPIAKPIPQTPESAGNKNNSSSNVEDTFIALNMRAALRNGLEGSSEETSFHDESLQDDRDEIENSAFQIHPAGIVLTKVGYYTIPSMDDLAKITNEKGECIVSDFTIGRKGYGSIYFEGDVNLTNLNLDDIVHIRRKEVIVYVDDNQKPPVGEGLNRKAEVTLDGVWPTDKTSRCLIKSPDRLADINYEGRLEAVSRKQGAQFKEYRPETGSWVFKVSHFSKYGLQDSDEEEEEHPPKTTSKKLKTAPLPPAGQATTFQMTLNGKPAPPPQSQSPEVEQLGRVVELDSDMVDITQEPVPDSVLEESVPEDQEPVSASTQIASSLGINPHVLQIMKASLLVDEEDVDAMEQRFGHFPSRGDTAQEICSPRLPISASHSSKSRSIVGGLLQSKFASGTFLSPSASVQECRTPRTSSLMNVPSTSPWSVPLPLATVFTVPSPAPEVPLKTVGIRRQPGLVPLEKSITYGKGKLLMDMALFMGRSFRVGWGPNWTLANSGEQLHGSHELENHQVAESMEYGFLPNPVAVKSLSESPFKVHLEKLGLRQRKLDEDLQLYQTPLELKLKHSTVHVDELCPLIVPNPGVSVIHGYADWVKKSPRDLLELPIVKHWSLTWTLCEALWGHLKELDSQLDEPSEYIQTLERRRAFSRWLSHTAAPQIEEEVSLTRRDSPIEAVFSYLTGSRISEACCLAQQSGDHRLALLLSQLVGSQSVRELLTMQLADWHQLQADSFIHDERLRIFALLAGKPVWQLSEQKQINVCSQLDWKRTLAIHLWYLLPPTASISRALSMYEEAFQNTCEGDKYACPPLPSYLEGSGCVVEEEKDPQRPLQDVCFHLLKLYSDRHYGLNQLLEPRSITADPLDYRLSWHLWEVLRALNYTHLSEQCEGVLQASYAGQLESEGLWEWAIFVFLHIDNSGMREKAVRELLTRHCQLSETPESWAKETFLTQKLCVPAEWIHEAKAVRAHMESNKHLEALYLFKAGHWNRCHKLVVRHLASDAIINENYDYLKGFLEDLAPPERSSLIQDWETSGLVYLDYIRVIEMLHRIQQVDCSGYELEHLHTKVTSLCNRIEQIPCYNAKDRLAQSDMAKRVANLLRVVLSLQHTPDATSNSTPDPQRVPLRLLAPHIGRLPMPEDYALEELRGLTQSYLRELTVGSQ.

Residues 1–156 (MFNKSFGTPF…LFGPSSFTAA (156 aa)) are FG repeats 1. Residues 157-213 (PTGTTIKFNPPTGTDTMVKAGVSTNISTKHQCITAMKEYESKSLEELRLEDYQANRK) form a GLEBS; interaction with RAE1 region. An FG repeats 2 region spans residues 214–480 (GPQNQVGAGT…NTSTAILGFG (267 aa)). Residues 512-535 (PFGDSPLFRNPMSDPKKKEERLKP) are disordered. Residue Ser-524 is modified to Phosphoserine. The span at 525–534 (DPKKKEERLK) shows a compositional bias: basic and acidic residues. Lys-563 participates in a covalent cross-link: Glycyl lysine isopeptide (Lys-Gly) (interchain with G-Cter in SUMO2). Lys-603 is modified (N6-acetyllysine; alternate). Lys-603 participates in a covalent cross-link: Glycyl lysine isopeptide (Lys-Gly) (interchain with G-Cter in SUMO2); alternate. Phosphoserine is present on residues Ser-608, Ser-612, Ser-618, Ser-623, Ser-625, and Ser-653. The disordered stretch occupies residues 663–682 (IAKPIPQTPESAGNKNNSSS). Lys-665 participates in a covalent cross-link: Glycyl lysine isopeptide (Lys-Gly) (interchain with G-Cter in SUMO2). Thr-670 is modified (phosphothreonine). Residues 670 to 682 (TPESAGNKNNSSS) show a composition bias toward polar residues. Ser-673, Ser-680, Ser-681, and Ser-839 each carry phosphoserine. Residues 738–880 (KVGYYTIPSM…GSWVFKVSHF (143 aa)) enclose the Peptidase S59 domain. The Nucleophile role is filled by Ser-881. The disordered stretch occupies residues 886–937 (QDSDEEEEEHPPKTTSKKLKTAPLPPAGQATTFQMTLNGKPAPPPQSQSPEV). A phosphoserine mark is found at Ser-888, Ser-934, Ser-1027, Ser-1042, Ser-1059, and Ser-1063. Thr-1069 carries the post-translational modification Phosphothreonine. Ser-1328 carries the phosphoserine modification. Thr-1771 is subject to Phosphothreonine.

This sequence belongs to the nucleoporin GLFG family. Part of the nuclear pore complex (NPC). Interacts directly with NUP96. Part of the Nup160 subcomplex in the nuclear pore which is composed of NUP160, NUP133, NUP107 and NUP96; this complex plays a role in RNA export and in tethering NUP98 and NUP153 to the nucleus. Interacts with RAE1. Does not interact with TPR. Interacts directly with NUP88 and NUP214, subunits of the cytoplasmic filaments of the NPC. Interacts (via N-terminus) with DHX9 (via DRBM, OB-fold and RGG domains); this interaction occurs in a RNA-dependent manner and stimulates DHX9-mediated ATPase activity. Post-translationally, the N-terminus is blocked. Isoform 1 is autoproteolytically cleaved to yield Nup98 and Nup96 or Nup98 only, respectively. Cleaved Nup98 is necessary for the targeting of Nup98 to the nuclear pore and the interaction with Nup96.

The protein resides in the nucleus membrane. It is found in the nucleus. It localises to the nuclear pore complex. Its subcellular location is the nucleoplasm. Plays a role in the nuclear pore complex (NPC) assembly and/or maintenance. Involved in the bidirectional transport across the NPC. May anchor NUP153 and TPR to the NPC. In terms of biological role, plays a role in the nuclear pore complex (NPC) assembly and/or maintenance. NUP98 and NUP96 are involved in the bidirectional transport across the NPC. May anchor NUP153 and TPR to the NPC. In cooperation with DHX9, plays a role in transcription and alternative splicing activation of a subset of genes. Involved in the localization of DHX9 in discrete intranuclear foci (GLFG-body). This is Nuclear pore complex protein Nup98-Nup96 (Nup98) from Rattus norvegicus (Rat).